We begin with the raw amino-acid sequence, 154 residues long: MGLSDGEWQLVLNVWGKVEGDLAGHGQEVLIKLFKNHPETLEKFDKFKHLKSEDEMKGSEDLKKHGNTVLTALGGILKKKGQHAAEIQPLAQSHATKHKIPIKYLEFISEAIIQVLQSKHPGDFGADAQGAMSKALELFRNDIAAKYKELGFQG.

The region spanning 2–148 is the Globin domain; that stretch reads GLSDGEWQLV…FRNDIAAKYK (147 aa). Position 4 is a phosphoserine (S4). H65 provides a ligand contact to nitrite. Residue H65 participates in O2 binding. At T68 the chain carries Phosphothreonine. H94 contributes to the heme b binding site.

It belongs to the globin family. In terms of assembly, monomeric.

Its subcellular location is the cytoplasm. It is found in the sarcoplasm. The catalysed reaction is Fe(III)-heme b-[protein] + nitric oxide + H2O = Fe(II)-heme b-[protein] + nitrite + 2 H(+). It catalyses the reaction H2O2 + AH2 = A + 2 H2O. Its function is as follows. Monomeric heme protein which primary function is to store oxygen and facilitate its diffusion within muscle tissues. Reversibly binds oxygen through a pentacoordinated heme iron and enables its timely and efficient release as needed during periods of heightened demand. Depending on the oxidative conditions of tissues and cells, and in addition to its ability to bind oxygen, it also has a nitrite reductase activity whereby it regulates the production of bioactive nitric oxide. Under stress conditions, like hypoxia and anoxia, it also protects cells against reactive oxygen species thanks to its pseudoperoxidase activity. This Spalax ehrenbergi (Middle East blind mole rat) protein is Myoglobin (MB).